Here is a 242-residue protein sequence, read N- to C-terminus: Zinc-finger homeodomain protein 11 (242 aa).

The ZF-HD dimerization-type; degenerate zinc-finger motif lies at Tyr31–Asp82. Disordered stretches follow at residues Pro83–Val109 and Pro135–Thr161. Residues Arg156–Tyr213 constitute a DNA-binding region (homeobox; atypical).

Homo- and heterodimer with other ZFHD proteins. Interacts with HIPP20, HIPP21, HIPP22, HIPP23, HIPP24, HIPP26, HIPP27, HIPP30 and MED25 (via ACID domain). Interacts with NAC019, NAC055 and NAC072 (via NAC binding domain). Binds to ZHD1, ZHD2, ZHD3, ZHD4, ZHD5, ZHD6, ZHD7, ZHD8, ZHD9, ZHD12, ZHD13 and ZHD14. As to expression, expressed in roots, inflorescences, open flowers and seeds. Detected in stems and seedlings.

Its subcellular location is the nucleus. In terms of biological role, transcription factor involved in the up-regulation of several stress-inducible genes. Acts as a transcriptional activator by interacting with MED25 and NAC proteins. Involved in increased drought tolerance. This Arabidopsis thaliana (Mouse-ear cress) protein is Zinc-finger homeodomain protein 11 (ZHD11).